The primary structure comprises 422 residues: UPF0761 membrane protein Paes_1471 (422 aa).

The next 6 helical transmembrane spans lie at 47-67 (LLSI…SPVF), 103-123 (SVPT…ISTI), 143-163 (FTLY…SLVA), 185-205 (LLLL…ILVP), 208-228 (KVKF…FEFS), and 247-267 (GALS…VVAL).

This sequence belongs to the UPF0761 family.

The protein localises to the cell inner membrane. This Prosthecochloris aestuarii (strain DSM 271 / SK 413) protein is UPF0761 membrane protein Paes_1471.